We begin with the raw amino-acid sequence, 183 residues long: Pyruvoyl-dependent arginine decarboxylase 2 (183 aa).

Pyruvic acid (Ser) is present on Ser41.

This sequence belongs to the PdaD family. Requires pyruvate as cofactor.

The enzyme catalyses L-arginine + H(+) = agmatine + CO2. The chain is Pyruvoyl-dependent arginine decarboxylase 2 (pdaD2) from Methanosarcina mazei (strain ATCC BAA-159 / DSM 3647 / Goe1 / Go1 / JCM 11833 / OCM 88) (Methanosarcina frisia).